The chain runs to 55 residues: ATP synthase protein 8 (55 aa).

The helical transmembrane segment at 7–28 threads the bilayer; that stretch reads ISWFFNFLLAWFFLFIVVTILL.

Belongs to the ATPase protein 8 family. As to quaternary structure, F-type ATPases have 2 components, CF(1) - the catalytic core - and CF(0) - the membrane proton channel.

The protein localises to the mitochondrion membrane. Functionally, mitochondrial membrane ATP synthase (F(1)F(0) ATP synthase or Complex V) produces ATP from ADP in the presence of a proton gradient across the membrane which is generated by electron transport complexes of the respiratory chain. F-type ATPases consist of two structural domains, F(1) - containing the extramembraneous catalytic core and F(0) - containing the membrane proton channel, linked together by a central stalk and a peripheral stalk. During catalysis, ATP synthesis in the catalytic domain of F(1) is coupled via a rotary mechanism of the central stalk subunits to proton translocation. Part of the complex F(0) domain. Minor subunit located with subunit a in the membrane. The protein is ATP synthase protein 8 (MT-ATP8) of Pisaster ochraceus (Ochre sea star).